The following is a 608-amino-acid chain: Protein transport protein SEC9 (608 aa).

Disordered stretches follow at residues 1-23 and 50-307; these read MGFKKMFKKKDPTESEIRESMQD and VTQK…QTAA. Over residues 9–21 the composition is skewed to basic and acidic residues; it reads KKDPTESEIRESM. 2 stretches are compositionally biased toward low complexity: residues 54-67 and 74-85; these read SSAAPPAARSNPYA and SGGNPYAAAAAG. A compositionally biased stretch (gly residues) spans 100 to 121; the sequence is NGGGGNGGSNSNGGSNSNGGSN. The segment covering 122-134 has biased composition (low complexity); the sequence is GSPYKMNNGGNNA. The segment covering 169 to 183 has biased composition (basic and acidic residues); sequence SKKEEAPPPLEDPRL. Residues 198 to 215 are compositionally biased toward acidic residues; the sequence is ERDDYEPVYDVGLPEEPE. A compositionally biased stretch (basic and acidic residues) spans 241 to 260; it reads NVDRELEEDKTALFGPRDDP. In terms of domain architecture, t-SNARE coiled-coil homology 1 spans 390-452; it reads RFTKQQSAAS…KIAEDKAKEL (63 aa). The tract at residues 514-533 is disordered; it reads GEKSKHRKEMMSKYGSRPGR. The region spanning 545-607 is the t-SNARE coiled-coil homology 2 domain; it reads DILEDEIDNN…HLNTARLAGI (63 aa).

It belongs to the SNAP-25 family.

In Yarrowia lipolytica (strain CLIB 122 / E 150) (Yeast), this protein is Protein transport protein SEC9 (SEC9).